A 241-amino-acid chain; its full sequence is MLSSVAAYSGAGRDLAMEPHSSVGPLQLRFSPYAFNGGTVLAIAGEDFSIVASDTRLSEGFSIHTRDSPKCYKLTDKTVIGCSGFHGDCLTLTKIIEARLKMYKHSNNKAMTTGAIAAMLSTILYSRRFFPYYVYNIIGGLDEEGKGAVYSFDPVGSYQRDSFKAGGSASAMLQPLLDNQVGFKNMQNVEHVPLSLDRAMRLVKDVFISAAERDVYTGDALKVCIVTKEGIRGETVPLRKD.

Methionine 1 is modified (N-acetylmethionine). The propeptide occupies 1–28 (MLSSVAAYSGAGRDLAMEPHSSVGPLQL). The O-linked (GlcNAc) serine glycan is linked to serine 58. 2 positions are modified to phosphoserine: serine 62 and serine 68. Tyrosine 150 carries the post-translational modification Phosphotyrosine. Serine 162 is modified (phosphoserine). Lysine 204 bears the N6-acetyllysine mark. O-linked (GlcNAc) serine glycosylation is present at serine 209.

Belongs to the peptidase T1B family. As to quaternary structure, the 26S proteasome consists of a 20S proteasome core and two 19S regulatory subunits. The 20S proteasome core is a barrel-shaped complex made of 28 subunits that are arranged in four stacked rings. The two outer rings are each formed by seven alpha subunits, and the two inner rings are formed by seven beta subunits. The proteolytic activity is exerted by three beta-subunits PSMB5, PSMB6 and PSMB7. Interacts with SERPINB2. Interacts with RFPL4A.

The protein localises to the cytoplasm. It localises to the nucleus. Its function is as follows. Non-catalytic component of the 20S core proteasome complex involved in the proteolytic degradation of most intracellular proteins. This complex plays numerous essential roles within the cell by associating with different regulatory particles. Associated with two 19S regulatory particles, forms the 26S proteasome and thus participates in the ATP-dependent degradation of ubiquitinated proteins. The 26S proteasome plays a key role in the maintenance of protein homeostasis by removing misfolded or damaged proteins that could impair cellular functions, and by removing proteins whose functions are no longer required. Associated with the PA200 or PA28, the 20S proteasome mediates ubiquitin-independent protein degradation. This type of proteolysis is required in several pathways including spermatogenesis (20S-PA200 complex) or generation of a subset of MHC class I-presented antigenic peptides (20S-PA28 complex). This Bos taurus (Bovine) protein is Proteasome subunit beta type-1 (PSMB1).